A 506-amino-acid chain; its full sequence is Lysine--tRNA ligase (506 aa).

The Mg(2+) site is built by Glu416 and Glu423.

It belongs to the class-II aminoacyl-tRNA synthetase family. In terms of assembly, homodimer. Mg(2+) is required as a cofactor.

Its subcellular location is the cytoplasm. The enzyme catalyses tRNA(Lys) + L-lysine + ATP = L-lysyl-tRNA(Lys) + AMP + diphosphate. The chain is Lysine--tRNA ligase from Baumannia cicadellinicola subsp. Homalodisca coagulata.